Here is a 241-residue protein sequence, read N- to C-terminus: Major microneme antigen (241 aa).

The N-terminal stretch at 1–34 is a signal peptide; it reads MTLPIHFPRCVLYGMASAVWSILFLHILVGDTMS. Positions 35–103 are excised as a propeptide; it reads AADALSWSGG…ATGRGPSFVH (69 aa). The segment covering 64-83 has biased composition (basic and acidic residues); it reads GKELEQQHGGEEQQMQRDTK. The segment at 64–90 is disordered; sequence GKELEQQHGGEEQQMQRDTKPAAFSNP. PAN domains are found at residues 112–181 and 185–241; these read CFPH…PRSC and CTDN…VERA. 6 disulfides stabilise this stretch: C112/C181, C137/C159, C141/C147, C185/C189, C210/C230, and C214/C220. A carbohydrate is bound at residue S121. A carbohydrate-binding residues include K162, Y169, and D174.

The protein belongs to the microneme antigen family. In terms of assembly, homodimer or heterodimer of major microneme antigen and microneme antigen. Contains six disulfide bonds.

The protein localises to the cytoplasmic vesicle. It localises to the secretory vesicle. The protein resides in the microneme. In terms of biological role, galactose-binding lectin. Plays a role in adhesion to the host cell. Has a potential role in invasion of host cells. The polypeptide is Major microneme antigen (Sarcocystis muris).